Here is a 257-residue protein sequence, read N- to C-terminus: Probable enoyl-CoA hydratase echA8 (257 aa).

The protein belongs to the enoyl-CoA hydratase/isomerase family.

The catalysed reaction is a (3S)-3-hydroxyacyl-CoA = a (2E)-enoyl-CoA + H2O. It catalyses the reaction a 4-saturated-(3S)-3-hydroxyacyl-CoA = a (3E)-enoyl-CoA + H2O. Functionally, could possibly oxidize fatty acids using specific components. This Mycobacterium leprae (strain TN) protein is Probable enoyl-CoA hydratase echA8 (echA8).